Reading from the N-terminus, the 267-residue chain is DCN1-like protein 2 (267 aa).

Positions 1 to 48 are disordered; the sequence is MTRKYTKKSSGSTASTTNSTAEIVDLTTSTSSVGKKRKSPDEKAQPIT. The segment covering 8–21 has biased composition (low complexity); sequence KSSGSTASTTNSTA. The 188-residue stretch at 75–262 folds into the DCUN1 domain; that stretch reads HYTYLYTYIF…LLDQFSEWVQ (188 aa).

This is DCN1-like protein 2 from Dictyostelium discoideum (Social amoeba).